Reading from the N-terminus, the 417-residue chain is Serine hydroxymethyltransferase (417 aa).

(6S)-5,6,7,8-tetrahydrofolate-binding positions include Leu-121 and 125-127 (GHL). Lys-229 carries the N6-(pyridoxal phosphate)lysine modification. 355–357 (SPF) provides a ligand contact to (6S)-5,6,7,8-tetrahydrofolate.

Belongs to the SHMT family. Homodimer. Pyridoxal 5'-phosphate is required as a cofactor.

The protein resides in the cytoplasm. It carries out the reaction (6R)-5,10-methylene-5,6,7,8-tetrahydrofolate + glycine + H2O = (6S)-5,6,7,8-tetrahydrofolate + L-serine. It participates in one-carbon metabolism; tetrahydrofolate interconversion. The protein operates within amino-acid biosynthesis; glycine biosynthesis; glycine from L-serine: step 1/1. In terms of biological role, catalyzes the reversible interconversion of serine and glycine with tetrahydrofolate (THF) serving as the one-carbon carrier. This reaction serves as the major source of one-carbon groups required for the biosynthesis of purines, thymidylate, methionine, and other important biomolecules. Also exhibits THF-independent aldolase activity toward beta-hydroxyamino acids, producing glycine and aldehydes, via a retro-aldol mechanism. The polypeptide is Serine hydroxymethyltransferase (Aeromonas hydrophila subsp. hydrophila (strain ATCC 7966 / DSM 30187 / BCRC 13018 / CCUG 14551 / JCM 1027 / KCTC 2358 / NCIMB 9240 / NCTC 8049)).